Here is a 115-residue protein sequence, read N- to C-terminus: uncharacterized protein (115 aa).

This is an uncharacterized protein from Aquifex aeolicus (strain VF5).